The following is a 429-amino-acid chain: Tol-Pal system protein TolB (429 aa).

An N-terminal signal peptide occupies residues 1 to 28; that stretch reads MSITPSFSRRSVVSLLAAGAFSSMSAFA.

The protein belongs to the TolB family. The Tol-Pal system is composed of five core proteins: the inner membrane proteins TolA, TolQ and TolR, the periplasmic protein TolB and the outer membrane protein Pal. They form a network linking the inner and outer membranes and the peptidoglycan layer.

It localises to the periplasm. Part of the Tol-Pal system, which plays a role in outer membrane invagination during cell division and is important for maintaining outer membrane integrity. In Polaromonas naphthalenivorans (strain CJ2), this protein is Tol-Pal system protein TolB.